The sequence spans 333 residues: D-glutamate N-acetyltransferase (333 aa).

Belongs to the N-acetyltransferase DgcN family.

It catalyses the reaction D-glutamate + acetyl-CoA = N-acetyl-D-glutamate + CoA + H(+). It participates in amino-acid degradation. Functionally, N-acetyltransferase involved in a deamination-independent D-glutamate degradation pathway, named the DgcN-DgcA pathway. Catalyzes the transfer of the acetyl moiety from acetyl-CoA to D-glutamate to generate N-acetyl-D-glutamate. This Tritonibacter scottomollicae (Epibacterium scottomollicae) protein is D-glutamate N-acetyltransferase.